The primary structure comprises 146 residues: 3-dehydroquinate dehydratase (146 aa).

Tyr-24 (proton acceptor) is an active-site residue. The substrate site is built by Asn-75, His-81, and Asp-88. The active-site Proton donor is the His-101. Substrate is bound by residues 102-103 (LS) and Arg-112.

This sequence belongs to the type-II 3-dehydroquinase family. In terms of assembly, homododecamer.

The catalysed reaction is 3-dehydroquinate = 3-dehydroshikimate + H2O. Its pathway is metabolic intermediate biosynthesis; chorismate biosynthesis; chorismate from D-erythrose 4-phosphate and phosphoenolpyruvate: step 3/7. Catalyzes a trans-dehydration via an enolate intermediate. The polypeptide is 3-dehydroquinate dehydratase (Maricaulis maris (strain MCS10) (Caulobacter maris)).